Reading from the N-terminus, the 284-residue chain is MTAQIIDGKAIAQSIRTKLSEKVTARKEAGQRIPGLAVVLVGADPASQVYVGSKRKACEEVGFISRSYDLETSCSEDELLSLIDSLNDDPTIDGILVQLPLPAHIEDSKVIERIRPDKDVDGFHPYNVGRLAQRIPVLRSCTPMGIMTLIKSTGVDTYGLDAVVVGASNIVGRPMTLELLLAGCTTTTCHRFTKNLEQKIRIADLVVVAVGKPGFIPGEWIKPGAIVIDVGINRLDNGTLVGDVQYDVAAQNASFITPVPGGVGPMTIASLLENTLYAAEQYHD.

NADP(+)-binding positions include 166-168 (GAS) and I232.

This sequence belongs to the tetrahydrofolate dehydrogenase/cyclohydrolase family. Homodimer.

It carries out the reaction (6R)-5,10-methylene-5,6,7,8-tetrahydrofolate + NADP(+) = (6R)-5,10-methenyltetrahydrofolate + NADPH. It catalyses the reaction (6R)-5,10-methenyltetrahydrofolate + H2O = (6R)-10-formyltetrahydrofolate + H(+). It participates in one-carbon metabolism; tetrahydrofolate interconversion. Its function is as follows. Catalyzes the oxidation of 5,10-methylenetetrahydrofolate to 5,10-methenyltetrahydrofolate and then the hydrolysis of 5,10-methenyltetrahydrofolate to 10-formyltetrahydrofolate. This is Bifunctional protein FolD from Shewanella baltica (strain OS223).